The sequence spans 388 residues: LL-diaminopimelate aminotransferase (388 aa).

Residues tyrosine 13, glycine 38, lysine 102, tyrosine 126, and asparagine 176 each contribute to the substrate site. Pyridoxal 5'-phosphate-binding positions include 101 to 102, tyrosine 126, asparagine 176, tyrosine 207, and 235 to 237; these read SK and SLS. The residue at position 238 (lysine 238) is an N6-(pyridoxal phosphate)lysine. Residue arginine 246 participates in pyridoxal 5'-phosphate binding. Residue arginine 364 participates in substrate binding.

This sequence belongs to the class-I pyridoxal-phosphate-dependent aminotransferase family. LL-diaminopimelate aminotransferase subfamily. In terms of assembly, homodimer. It depends on pyridoxal 5'-phosphate as a cofactor.

The enzyme catalyses (2S,6S)-2,6-diaminopimelate + 2-oxoglutarate = (S)-2,3,4,5-tetrahydrodipicolinate + L-glutamate + H2O + H(+). Its pathway is amino-acid biosynthesis; L-lysine biosynthesis via DAP pathway; LL-2,6-diaminopimelate from (S)-tetrahydrodipicolinate (aminotransferase route): step 1/1. Functionally, involved in the synthesis of meso-diaminopimelate (m-DAP or DL-DAP), required for both lysine and peptidoglycan biosynthesis. Catalyzes the direct conversion of tetrahydrodipicolinate to LL-diaminopimelate. The chain is LL-diaminopimelate aminotransferase from Dehalococcoides mccartyi (strain ATCC BAA-2100 / JCM 16839 / KCTC 5957 / BAV1).